Consider the following 1357-residue polypeptide: Mediator of RNA polymerase II transcription subunit 13 (1357 aa).

2 disordered regions span residues 356 to 391 (SCNY…GNGF) and 420 to 487 (DLWN…HRKE). Polar residues predominate over residues 435–451 (INPTSQQGDSARITSGS).

This sequence belongs to the Mediator complex subunit 13 family. As to quaternary structure, component of the SRB8-11 complex, which itself associates with the Mediator complex.

Its subcellular location is the nucleus. Its function is as follows. Component of the SRB8-11 complex. The SRB8-11 complex is a regulatory module of the Mediator complex which is itself involved in regulation of basal and activated RNA polymerase II-dependent transcription. The SRB8-11 complex may be involved in the transcriptional repression of a subset of genes regulated by Mediator. It may inhibit the association of the Mediator complex with RNA polymerase II to form the holoenzyme complex. The polypeptide is Mediator of RNA polymerase II transcription subunit 13 (SSN2) (Eremothecium gossypii (strain ATCC 10895 / CBS 109.51 / FGSC 9923 / NRRL Y-1056) (Yeast)).